The primary structure comprises 164 residues: Shikimate kinase (164 aa).

Glycine 10–threonine 15 serves as a coordination point for ATP. A Mg(2+)-binding site is contributed by threonine 14. The substrate site is built by aspartate 28, arginine 52, and glycine 75. Residue arginine 116 coordinates ATP. Residue arginine 134 participates in substrate binding. Arginine 151 contributes to the ATP binding site.

Belongs to the shikimate kinase family. In terms of assembly, monomer. Mg(2+) serves as cofactor.

It is found in the cytoplasm. The catalysed reaction is shikimate + ATP = 3-phosphoshikimate + ADP + H(+). It participates in metabolic intermediate biosynthesis; chorismate biosynthesis; chorismate from D-erythrose 4-phosphate and phosphoenolpyruvate: step 5/7. Functionally, catalyzes the specific phosphorylation of the 3-hydroxyl group of shikimic acid using ATP as a cosubstrate. In Streptococcus equi subsp. zooepidemicus (strain MGCS10565), this protein is Shikimate kinase.